Reading from the N-terminus, the 833-residue chain is Neurogenic locus protein delta (833 aa).

The N-terminal stretch at 1–18 is a signal peptide; sequence MHWIKCLLTAFICFTVIV. Residues 19-594 are Extracellular-facing; that stretch reads QVHSSGSFEL…ARADGLTNAQ (576 aa). Cystine bridges form between Cys46–Cys61 and Cys68–Cys82. N-linked (GlcNAc...) asparagine glycans are attached at residues Asn98, Asn137, and Asn167. Residues 182–226 form the DSL domain; that stretch reads VTCDLNYYGSGCAKFCRPRDDSFGHSTCSETGEIICLTGWQGDYC. 30 disulfide bridges follow: Cys184–Cys193, Cys197–Cys209, Cys217–Cys226, Cys231–Cys240, Cys235–Cys246, Cys248–Cys257, Cys260–Cys271, Cys266–Cys277, Cys279–Cys288, Cys295–Cys307, Cys301–Cys317, Cys319–Cys328, Cys335–Cys348, Cys342–Cys360, Cys362–Cys371, Cys378–Cys388, Cys383–Cys404, Cys406–Cys415, Cys422–Cys433, Cys427–Cys439, Cys441–Cys450, Cys457–Cys468, Cys462–Cys477, Cys479–Cys488, Cys495–Cys506, Cys500–Cys515, Cys517–Cys526, Cys533–Cys544, Cys538–Cys553, and Cys555–Cys564. EGF-like domains follow at residues 227–258, 256–289, 291–329, 331–372, 374–416, and 418–451; these read HIPKCAKGCEHGHCDKPNQCVCQLGWKGALCN, LCNECVLEPNCIHGTCNKPWTCICNEGWGGLYCN, DLNYCTNHRPCKNGGTCFNTGEGLYTCKCAPGYSGDDCE, EIYS…KMCE, KVLT…PNCD, and QLDNCSPNPCINGGSCQPSGKCICPAGFSGTRCE. Residues 453 to 489 enclose the EGF-like 7; calcium-binding domain; it reads NIDDCLGHQCENGGTCIDMVNQYRCQCVPGFHGTHCS. Positions 491 to 527 constitute an EGF-like 8 domain; that stretch reads KVDLCLIRPCANGGTCLNLNNDYQCTCRAGFTGKDCS. Residues 529–565 form the EGF-like 9; calcium-binding domain; the sequence is DIDECSSGPCHNGGTCMNRVNSFECVCANGFRGKQCD. A helical transmembrane segment spans residues 595 to 617; it reads VVLIAVFSVAMPLVAVIAACVVF. Residues 618–833 are Cytoplasmic-facing; sequence CMKRKRKRAQ…RSVVCGTPHM (216 aa). Position 666 is a phosphothreonine (Thr666). The segment at 743–773 is disordered; sequence QLNTDPTLMHRGSPAGSSAKGASGGGPGAAE. Positions 754–763 are enriched in low complexity; it reads GSPAGSSAKG.

In terms of assembly, interacts with Notch (N) via the EGF repeats and the N EGF repeats. Ubiquitinated by Mib, leading to its endocytosis and subsequent degradation. As to expression, detected in all areas with neurogenic abilities, for example the neurogenic ectoderm and the primordia of the sense organs. Later expression is restricted to those cells that have adopted a neural fate.

Its subcellular location is the membrane. Its function is as follows. Acts as a ligand for Notch (N) receptor. Essential for proper differentiation of ectoderm. Delta is required for the correct separation of neural and epidermal cell lineages. Fringe (fng) acts in the Golgi to determine the type of O-linked fucose on the EGF modules in N, altering the ability of N to bind with Delta. O-fut1 also has a role in modulating the interaction. The polypeptide is Neurogenic locus protein delta (Drosophila melanogaster (Fruit fly)).